The sequence spans 698 residues: UvrABC system protein B (698 aa).

The region spanning 25–183 (NGLNSGLVHQ…TLIDLQFERN (159 aa)) is the Helicase ATP-binding domain. Residue 38–45 (GATGTGKT) participates in ATP binding. A Beta-hairpin motif is present at residues 91–114 (YYDAYTPEAYVPSKDLYIEKEAQI). One can recognise a Helicase C-terminal domain in the interval 428-594 (QIDDLLGEIK…GIVKAVRDLT (167 aa)). In terms of domain architecture, UVR spans 622 to 657 (FKVINALEKQMKQAAKDLEFEKAALLRDQLTEMRQT).

This sequence belongs to the UvrB family. As to quaternary structure, forms a heterotetramer with UvrA during the search for lesions. Interacts with UvrC in an incision complex.

Its subcellular location is the cytoplasm. In terms of biological role, the UvrABC repair system catalyzes the recognition and processing of DNA lesions. A damage recognition complex composed of 2 UvrA and 2 UvrB subunits scans DNA for abnormalities. Upon binding of the UvrA(2)B(2) complex to a putative damaged site, the DNA wraps around one UvrB monomer. DNA wrap is dependent on ATP binding by UvrB and probably causes local melting of the DNA helix, facilitating insertion of UvrB beta-hairpin between the DNA strands. Then UvrB probes one DNA strand for the presence of a lesion. If a lesion is found the UvrA subunits dissociate and the UvrB-DNA preincision complex is formed. This complex is subsequently bound by UvrC and the second UvrB is released. If no lesion is found, the DNA wraps around the other UvrB subunit that will check the other stand for damage. This is UvrABC system protein B from Herpetosiphon aurantiacus (strain ATCC 23779 / DSM 785 / 114-95).